A 500-amino-acid chain; its full sequence is MLNVNFVNEASSTNQGLVVFIDEQLKLDSNLIGLDQQHHGLISKTIQNKLQFTGKYGQIKVIPSVIKSGEVRYLIIAGLGNEEKLTEAKIEELGGKILQHATSCKISTIGLKITNRISRFTSQTFASLVASGAFLASYRFDKYRTTLKEAEKFAVESIEIFTDNSTETAKLFEIKKLIAEAVFFTRDISNEPSNIKTPQVYAERIVDRLEPLGVDVDVIGEREMKNLGMGALLGVGQGSQNESKLVVMEYKGGSKDVPTIALVGKGVIFDTGGISLKPSSDMHLMRYDMGGSAAVVGTIIAVAGQKLPVNIVGVVGLVENMLSGNAQRPGDVVTTMSGQTAEVLNTDAEGRLVLADAVWYAQEKFKPKCVIDVATLTGAITIALGNTYAGCFSNNDELADKLIKVGEEVNEKLWRMPLHDEYDAMIHSDIADMANIANVPRAAGSCIAAHFIKRFIKDGVDWAHLDIAGVANSNKASALGPKGAVGYGVRLLEKFIKEYT.

2 residues coordinate Mn(2+): K265 and D270. Residue K277 is part of the active site. 3 residues coordinate Mn(2+): D288, D347, and E349. Residue R351 is part of the active site.

The protein belongs to the peptidase M17 family. It depends on Mn(2+) as a cofactor.

It is found in the cytoplasm. The enzyme catalyses Release of an N-terminal amino acid, Xaa-|-Yaa-, in which Xaa is preferably Leu, but may be other amino acids including Pro although not Arg or Lys, and Yaa may be Pro. Amino acid amides and methyl esters are also readily hydrolyzed, but rates on arylamides are exceedingly low.. The catalysed reaction is Release of an N-terminal amino acid, preferentially leucine, but not glutamic or aspartic acids.. Presumably involved in the processing and regular turnover of intracellular proteins. Catalyzes the removal of unsubstituted N-terminal amino acids from various peptides. In Rickettsia rickettsii (strain Iowa), this protein is Probable cytosol aminopeptidase.